Reading from the N-terminus, the 368-residue chain is Polymerase delta-interacting protein 2 (368 aa).

The transit peptide at 1–21 directs the protein to the mitochondrion; sequence MAGCVARRALAVGSRWWSRSL. One can recognise an ApaG domain in the interval 235–360; it reads RETTENIRVT…FSLESNKDEK (126 aa). Threonine 292 bears the Phosphothreonine mark.

In terms of assembly, interacts with PCNA and POLD2. Interacts with SSBP1. Interacts with PRIMPOL; leading to enhance DNA polymerase activity of PRIMPOL. Interacts with POLH. Interacts with POLD1; leading to stimulate DNA polymerase activity of POLD1.

It is found in the mitochondrion matrix. Its subcellular location is the nucleus. Functionally, involved in DNA damage tolerance by regulating translesion synthesis (TLS) of templates carrying DNA damage lesions such as 8oxoG and abasic sites. May act by stimulating activity of DNA polymerases involved in TLS, such as PRIMPOL and polymerase delta (POLD1). The chain is Polymerase delta-interacting protein 2 from Mus musculus (Mouse).